Reading from the N-terminus, the 630-residue chain is ATP-dependent zinc metalloprotease FtsH (630 aa).

Residues 1-7 lie on the Cytoplasmic side of the membrane; the sequence is MNNFMKN. A helical transmembrane segment spans residues 8-28; it reads IGFYLVLIALSILVAQFFVDT. Residues 29-111 lie on the Periplasmic side of the membrane; that stretch reads DVNTIVDTDV…KTEPEPTAPW (83 aa). The chain crosses the membrane as a helical span at residues 112-132; it reads WTGMLAYILPIILLIGAWFFI. Residues 133 to 630 are Cytoplasmic-facing; the sequence is MQRMQGGGSQ…ENREHENNDK (498 aa). Residue 203–210 coordinates ATP; it reads GPPGTGKT. His425 lines the Zn(2+) pocket. Glu426 is an active-site residue. Residues His429 and Asp501 each contribute to the Zn(2+) site. The disordered stretch occupies residues 601–630; the sequence is KLIKGEPLDDDSIDNSTDENENREHENNDK. Residues 608–619 show a composition bias toward acidic residues; sequence LDDDSIDNSTDE. The segment covering 620–630 has biased composition (basic and acidic residues); it reads NENREHENNDK.

It in the central section; belongs to the AAA ATPase family. The protein in the C-terminal section; belongs to the peptidase M41 family. In terms of assembly, homohexamer. Zn(2+) is required as a cofactor.

The protein localises to the cell inner membrane. Acts as a processive, ATP-dependent zinc metallopeptidase for both cytoplasmic and membrane proteins. Plays a role in the quality control of integral membrane proteins. The protein is ATP-dependent zinc metalloprotease FtsH of Halothermothrix orenii (strain H 168 / OCM 544 / DSM 9562).